Consider the following 56-residue polypeptide: Preprotein translocase subunit SecG (56 aa).

Topologically, residues 1-29 are cytoplasmic; it reads MAKEKATLPPTGAGLMRFFDEDTRAVKVS. Residues 30-49 traverse the membrane as a helical segment; the sequence is PKGVIALTLLLIAFEFILHM. The Extracellular portion of the chain corresponds to 50 to 56; that stretch reads FGSSIFG.

This sequence belongs to the SEC61-beta family. Component of the protein translocase complex. Heterotrimer consisting of alpha (SecY), beta (SecG) and gamma (SecE) subunits. Can form oligomers of the heterotrimer.

Its subcellular location is the cell membrane. Functionally, involved in protein export. The function of the beta subunit is unknown, but it may be involved in stabilization of the trimeric complex. The polypeptide is Preprotein translocase subunit SecG (Thermococcus kodakarensis (strain ATCC BAA-918 / JCM 12380 / KOD1) (Pyrococcus kodakaraensis (strain KOD1))).